Here is a 121-residue protein sequence, read N- to C-terminus: Basic phospholipase A2 homolog zhaoermiatoxin (121 aa).

Disulfide bonds link C26-C115, C28-C44, C43-C95, C49-C121, C50-C88, C57-C81, and C75-C86.

It belongs to the phospholipase A2 family. Group II subfamily. R49 sub-subfamily. Homodimer. Expressed by the venom gland.

The protein resides in the secreted. Functionally, snake venom phospholipase A2 homolog that induces myonecrosis, and edema. Has low myotoxic activity. This is Basic phospholipase A2 homolog zhaoermiatoxin from Protobothrops mangshanensis (Mangshan pitviper).